Reading from the N-terminus, the 382-residue chain is ORC1-type DNA replication protein 1 (382 aa).

ATP is bound by residues 63-67, Tyr205, and Arg217; that span reads TGKTA.

This sequence belongs to the CDC6/cdc18 family. As to quaternary structure, monomer. Interacts with MCM via the WH domain. In terms of processing, autophosphorylated on a serine. Phosphorylation is stimulated by binding to MCM. Both single-stranded DNA and double-stranded DNA inhibit the phosphorylation reaction.

Its function is as follows. Involved in regulation of DNA replication. May play an essential role in origin recognition. Binds to DNA, with a preference for origin-specific double-stranded sequences. Does not bind single-stranded DNA. Inhibits MCM helicase activity but does not affect its oligomeric state. The polypeptide is ORC1-type DNA replication protein 1 (cdc6-1) (Methanothermobacter thermautotrophicus (strain ATCC 29096 / DSM 1053 / JCM 10044 / NBRC 100330 / Delta H) (Methanobacterium thermoautotrophicum)).